Consider the following 328-residue polypeptide: MFMKAPVRVAVTGAAGQISYSLLFRIASGDMLGKDQPVILQLLEITPALEALNGVIMELEDCAFPLVAGITGTDDANVAFKDADYALLVGARPRGPGMERKDLLEANAAIFSAQGKAINDNASKGIKVLVVGNPANTNALIAQRNAPDIDPRQFTAMTRLDHNRAMAQLANKLGKTVNDVKKMLIWGNHSSTQYPDLHHCEVDGKVAIDQVEQDWYENDYIPTVQQRGAAIIKARGASSAASAANAAVDHMRSWALGTDEGDWVSMGIYSDGSYGIQEGLIYSFPCTCKNGDWTIVQGLEVNDFSRGKMQATEQELAEERDAVSHLLP.

Position 13–19 (13–19) interacts with NAD(+); sequence GAAGQIS. Residues R94 and R100 each coordinate substrate. Residues N107, Q114, and 131-133 each bind NAD(+); that span reads VGN. N133 and R164 together coordinate substrate. The active-site Proton acceptor is H189.

The protein belongs to the LDH/MDH superfamily. MDH type 2 family.

It carries out the reaction (S)-malate + NAD(+) = oxaloacetate + NADH + H(+). In terms of biological role, catalyzes the reversible oxidation of malate to oxaloacetate. The protein is Malate dehydrogenase of Alcanivorax borkumensis (strain ATCC 700651 / DSM 11573 / NCIMB 13689 / SK2).